A 257-amino-acid polypeptide reads, in one-letter code: Imidazole glycerol phosphate synthase subunit HisF (257 aa).

Active-site residues include Asp-11 and Asp-130.

The protein belongs to the HisA/HisF family. Heterodimer of HisH and HisF.

The protein resides in the cytoplasm. It catalyses the reaction 5-[(5-phospho-1-deoxy-D-ribulos-1-ylimino)methylamino]-1-(5-phospho-beta-D-ribosyl)imidazole-4-carboxamide + L-glutamine = D-erythro-1-(imidazol-4-yl)glycerol 3-phosphate + 5-amino-1-(5-phospho-beta-D-ribosyl)imidazole-4-carboxamide + L-glutamate + H(+). The protein operates within amino-acid biosynthesis; L-histidine biosynthesis; L-histidine from 5-phospho-alpha-D-ribose 1-diphosphate: step 5/9. Its function is as follows. IGPS catalyzes the conversion of PRFAR and glutamine to IGP, AICAR and glutamate. The HisF subunit catalyzes the cyclization activity that produces IGP and AICAR from PRFAR using the ammonia provided by the HisH subunit. This chain is Imidazole glycerol phosphate synthase subunit HisF, found in Vibrio cholerae serotype O1 (strain ATCC 39541 / Classical Ogawa 395 / O395).